Here is a 251-residue protein sequence, read N- to C-terminus: Imidazole glycerol phosphate synthase subunit HisF (251 aa).

Active-site residues include Asp-11 and Asp-130.

The protein belongs to the HisA/HisF family. Heterodimer of HisH and HisF.

The protein localises to the cytoplasm. It catalyses the reaction 5-[(5-phospho-1-deoxy-D-ribulos-1-ylimino)methylamino]-1-(5-phospho-beta-D-ribosyl)imidazole-4-carboxamide + L-glutamine = D-erythro-1-(imidazol-4-yl)glycerol 3-phosphate + 5-amino-1-(5-phospho-beta-D-ribosyl)imidazole-4-carboxamide + L-glutamate + H(+). It functions in the pathway amino-acid biosynthesis; L-histidine biosynthesis; L-histidine from 5-phospho-alpha-D-ribose 1-diphosphate: step 5/9. IGPS catalyzes the conversion of PRFAR and glutamine to IGP, AICAR and glutamate. The HisF subunit catalyzes the cyclization activity that produces IGP and AICAR from PRFAR using the ammonia provided by the HisH subunit. The polypeptide is Imidazole glycerol phosphate synthase subunit HisF (Cytophaga hutchinsonii (strain ATCC 33406 / DSM 1761 / CIP 103989 / NBRC 15051 / NCIMB 9469 / D465)).